A 424-amino-acid chain; its full sequence is Zinc finger protein 597 (424 aa).

Residues 14-88 (ILFEDLAVYF…KYPIAAPLVP (75 aa)) form the KRAB domain. 4 C2H2-type zinc fingers span residues 156 to 178 (YKCPECDQNFSDHSYLVLHQKIH), 184 to 206 (HKCGDCGKIFNHRANLRTHRRIH), 212 to 234 (YKCAKCSASFRQHSHLSRHMNSH), and 240 to 262 (YTCSICGRGFMWLPGLAQHQKSH). Lysine 300 is covalently cross-linked (Glycyl lysine isopeptide (Lys-Gly) (interchain with G-Cter in SUMO2)). 3 consecutive C2H2-type zinc fingers follow at residues 341–363 (LQCPDCDMTFPCFSELISHQNIH), 369–391 (HKCKTCEESFALDSELACHQKSH), and 397–419 (FKCTVCGKTFKSNLHLITHKRTH).

The protein belongs to the krueppel C2H2-type zinc-finger protein family.

Its subcellular location is the nucleus. Its function is as follows. May be involved in transcriptional regulation. In Homo sapiens (Human), this protein is Zinc finger protein 597 (ZNF597).